The sequence spans 646 residues: Stage V sporulation protein D (646 aa).

The active-site Acyl-ester intermediate is Ser-294. The region spanning 580 to 638 (DTKTIEVPNVVGMSVSDLESLLVNLNVDASGKGSKIVKQSPAAGTKVKEGSKIRVYLTE) is the PASTA domain.

This sequence belongs to the transpeptidase family.

Its subcellular location is the cell membrane. The catalysed reaction is Preferential cleavage: (Ac)2-L-Lys-D-Ala-|-D-Ala. Also transpeptidation of peptidyl-alanyl moieties that are N-acyl substituents of D-alanine.. The protein operates within cell wall biogenesis; peptidoglycan biosynthesis. Its function is as follows. Penicillin-binding protein with an unknown catalytic activity. May have a specialized role in the morphogenesis of spore cortex, which is a modified form of peptidoglycan. Spore cortex formation is determined primarily by the mother cell. This is Stage V sporulation protein D (spoVD) from Bacillus subtilis (strain 168).